The sequence spans 142 residues: Large ribosomal subunit protein uL13 (142 aa).

The protein belongs to the universal ribosomal protein uL13 family. Part of the 50S ribosomal subunit.

Functionally, this protein is one of the early assembly proteins of the 50S ribosomal subunit, although it is not seen to bind rRNA by itself. It is important during the early stages of 50S assembly. The sequence is that of Large ribosomal subunit protein uL13 from Helicobacter hepaticus (strain ATCC 51449 / 3B1).